The primary structure comprises 551 residues: Probable 4-coumarate--CoA ligase 2 (551 aa).

ATP-binding residues include S205, S206, G207, T208, T209, and K213. (E)-4-coumaroyl-AMP contacts are provided by Y253 and T257. K274 lines the CoA pocket. The SBD1 stretch occupies residues 276 to 346 (EFVRFLDLIQ…RFKGKLIIKQ (71 aa)). Residues A323, Q346, G347, and T351 each contribute to the (E)-4-coumaroyl-AMP site. Q346, G347, T351, D430, and R445 together coordinate ATP. The interval 347–409 (GYGATELSPA…IKGPNVMLGY (63 aa)) is SBD2. The (E)-4-coumaroyl-AMP site is built by K447 and K451. CoA is bound by residues K453 and G454. K537 contacts ATP.

Belongs to the ATP-dependent AMP-binding enzyme family. Mg(2+) serves as cofactor.

The catalysed reaction is (E)-4-coumarate + ATP + CoA = (E)-4-coumaroyl-CoA + AMP + diphosphate. It carries out the reaction (E)-4-coumarate + ATP + H(+) = (E)-4-coumaroyl-AMP + diphosphate. The enzyme catalyses (E)-4-coumaroyl-AMP + CoA = (E)-4-coumaroyl-CoA + AMP + H(+). Its pathway is phytoalexin biosynthesis; 3,4',5-trihydroxystilbene biosynthesis; 3,4',5-trihydroxystilbene from trans-4-coumarate: step 1/2. In terms of biological role, carboxylate--CoA ligase that may use 4-coumarate as substrate. Follows a two-step reaction mechanism, wherein the carboxylate substrate first undergoes adenylation by ATP, followed by a thioesterification in the presence of CoA to yield the final CoA thioester. The chain is Probable 4-coumarate--CoA ligase 2 (4cl2) from Dictyostelium discoideum (Social amoeba).